A 172-amino-acid chain; its full sequence is Protein-export protein SecB (172 aa).

The protein belongs to the SecB family. As to quaternary structure, homotetramer, a dimer of dimers. One homotetramer interacts with 1 SecA dimer.

The protein localises to the cytoplasm. Its function is as follows. One of the proteins required for the normal export of preproteins out of the cell cytoplasm. It is a molecular chaperone that binds to a subset of precursor proteins, maintaining them in a translocation-competent state. It also specifically binds to its receptor SecA. The protein is Protein-export protein SecB of Ralstonia pickettii (strain 12J).